The primary structure comprises 156 residues: Small ribosomal subunit protein uS7 (156 aa).

Belongs to the universal ribosomal protein uS7 family. Part of the 30S ribosomal subunit. Contacts proteins S9 and S11.

One of the primary rRNA binding proteins, it binds directly to 16S rRNA where it nucleates assembly of the head domain of the 30S subunit. Is located at the subunit interface close to the decoding center, probably blocks exit of the E-site tRNA. This Caldanaerobacter subterraneus subsp. tengcongensis (strain DSM 15242 / JCM 11007 / NBRC 100824 / MB4) (Thermoanaerobacter tengcongensis) protein is Small ribosomal subunit protein uS7.